Reading from the N-terminus, the 353-residue chain is Vomeronasal type-1 receptor 1 (353 aa).

Topologically, residues 1–56 (MVGDTLKLLSPLMTRYFFLLFYSTDSSDLNENQHPLDFDEMAFGKVKSGISFLIQT) are extracellular. Residues 57–77 (GVGILGNSFLLCFYNLILFTG) traverse the membrane as a helical segment. Over 78-84 (HKLRPTD) the chain is Cytoplasmic. Residues 85–105 (LILSHLALANSMVLFFKGIPQ) form a helical membrane-spanning segment. The Extracellular portion of the chain corresponds to 106 to 132 (TMAAFGLKYLLNDTGCKFVFYYHRVGT). N-linked (GlcNAc...) asparagine glycosylation occurs at asparagine 117. Residues 133–153 (RVSLSTICLLNGFQAIKLNPS) form a helical membrane-spanning segment. The Cytoplasmic portion of the chain corresponds to 154–169 (ICRWMEIKIRSPRFID). Residues 170–190 (FCCLLCWVPHVLMNASVLLLV) form a helical membrane-spanning segment. Topologically, residues 191 to 226 (NGPLNSKNSSAKNNYGYCSYKASKRFSSLHAVLYFS) are extracellular. A glycan (N-linked (GlcNAc...) asparagine) is linked at asparagine 198. Residues 227 to 247 (PDFMSLGFMVWASGSMVFFLY) form a helical membrane-spanning segment. Over 248–274 (RHKQQVQHNHSNRLSCRPSQETRATRT) the chain is Cytoplasmic. The chain crosses the membrane as a helical span at residues 275–295 (IMVLVSSFFVFYSVHSFLTIW). At 296–303 (TTVVANPG) the chain is on the extracellular side. Residues 304 to 324 (QWIVNNSVLVASYFPSRSPFV) traverse the membrane as a helical segment. Over 325–353 (LIMSDTRISQFCFACRTRKTLFPNLVVMP) the chain is Cytoplasmic.

The protein belongs to the G-protein coupled receptor 1 family.

It is found in the cell membrane. Putative pheromone receptor. In Gorilla gorilla gorilla (Western lowland gorilla), this protein is Vomeronasal type-1 receptor 1 (VN1R1).